The chain runs to 468 residues: Spliceosome-associated protein CWC27 homolog (468 aa).

S2 is subject to N-acetylserine. The 156-residue stretch at T11–V166 folds into the PPIase cyclophilin-type domain. Disordered stretches follow at residues L204–T382 and R427–R468. Positions S206–S229 form a coiled coil. The span at S231–H241 shows a compositional bias: basic and acidic residues. A compositionally biased stretch (acidic residues) spans T256–V268. Basic and acidic residues-rich tracts occupy residues E269–A287 and G302–G342. A Phosphoserine modification is found at S273. Residues A309 to G342 are a coiled coil. Residue S343 is modified to Phosphoserine. 2 stretches are compositionally biased toward basic and acidic residues: residues E356–R368 and R453–R468.

It belongs to the cyclophilin-type PPIase family. In terms of assembly, part of the activated spliceosome B/catalytic step 1 spliceosome, one of the forms of the spliceosome which has a well-formed active site but still cannot catalyze the branching reaction and is composed at least of 52 proteins, the U2, U5 and U6 snRNAs and the pre-mRNA. Recruited during early steps of activated spliceosome B maturation, it is probably one of the first proteins released from this complex as he matures to the spliceosome C complex. Component of the minor spliceosome, which splices U12-type introns.

It localises to the nucleus. Its function is as follows. As part of the spliceosome, plays a role in pre-mRNA splicing. Probable inactive PPIase with no peptidyl-prolyl cis-trans isomerase activity. As a component of the minor spliceosome, involved in the splicing of U12-type introns in pre-mRNAs. The chain is Spliceosome-associated protein CWC27 homolog from Rattus norvegicus (Rat).